The chain runs to 251 residues: Probable transcriptional regulatory protein Cpar_0525 (251 aa).

Belongs to the TACO1 family.

The protein localises to the cytoplasm. This chain is Probable transcriptional regulatory protein Cpar_0525, found in Chlorobaculum parvum (strain DSM 263 / NCIMB 8327) (Chlorobium vibrioforme subsp. thiosulfatophilum).